A 342-amino-acid chain; its full sequence is Fatty acid desaturase 6 (342 aa).

2 helical membrane passes run 39–59 and 63–83; these read GVDCAILALSLLALPPGFLCL and SPLVFALGITILGVCHYTLTV. Residues 87–91 carry the Histidine box-1 motif; the sequence is HLATH. The short motif at 124 to 128 is the Histidine box-2 element; that stretch reads HVKMH. 2 helical membrane-spanning segments follow: residues 151–171 and 185–205; these read YVYMFLAPLLIPIITPLVAVE and LGLISLGLYSQYWLLLNVSGF. A Histidine box-3 motif is present at residues 277-281; the sequence is HVEHH.

It belongs to the fatty acid desaturase type 1 family.

It localises to the membrane. It participates in lipid metabolism; fatty acid metabolism. This chain is Fatty acid desaturase 6 (FADS6), found in Bos taurus (Bovine).